A 45-amino-acid chain; its full sequence is uncharacterized protein (45 aa).

This is an uncharacterized protein from Bacillus subtilis (strain 168).